The chain runs to 1476 residues: MQKSPLEKASFISKLFFSWTTPILRKGYRHHLELSDIYQAPSSDSADHLSEKLEREWDREQASKKKPQLIHALRRCFVWRFVFYGVLLYLGEVTKAVQPVLLGRIIASYDPDNTEERSIAIYLGIGLCLLFIVRTLLLHPAIFGLHHIGMQMRIAMFSLIYKKTLKLSSRVLDKISIGQLISLLSNNLNKFDEGLALAHFIWIAPLQVVLLMGLLWDLLQFSAFCGLGLLIVLVIFQAILGKMMVKYRDKRAAKINERLVITSEVIDNIYSVKAYCWESAMEKIIESLREEELKMTRRSAYMRFFTSSAFFFSGFFVVFLSVLPYTVINGIVLRKIFTTISFCIVLRMSVTRQFPTAVQIWYDSLGMIRKIQDFLQTQEYKVLEYNLMFTGLVMENVTAFWEEGFQELLEKVQLNNDDRKTSNGENHLSFSHLCLVGNPVLKNINLNIKKGEMLAITGSTGAGKTSLLMLILGELEASEGIIKHSGRVSFSSQISWIMPGTIKENIIFGVSYDEYRYKSVVKACQLQEDITKFAEQDNTVLGEGGVTLSGGQRARISLARAVYKDADLYLLDSPFGYLDVLTEEQIFESCVCKLMASKTRILVTSKMEQLKKADKILILHEGSSYFYGTFSELQSLRPDFSSKLMGYDTFDQFTEERRSSILTETLRRFSVDDASTTWNKAKQSFRQTGEFGEKRKNSILSSFSSVKKISIVQKTPLSIEGESDDLQERRLSLVPDSEHGEAALPRSNMITAGPTFPGRRRQSVLDLMTFTPSSVSSSLQRTRASIRKISLAPRISLKEEDIYSRRLSQDSTLNITEEINEEDLKECFFDDMVKIPTVTTWNTYLRYFTLHRGLFAVLIWCVLVFLVEVAASLFVLWLLKNNPVNGGNNGTKIANTSYVVVITSSSFYYIFYIYVGVADTLLALSLFRGLPLVHTLITASKILHRKMLHSILHAPMSTFNKLKAGGILNRFSKDIAILDDFLPLTIFDFIQLLFIVVGAIIVVSALQPYIFLATVPGLAVFILLRAYFLHTSQQLKQLESEGRSPIFTHLVTSLKGLWTLRAFRRQTYFETLFHKALNLHTANWFMYLATLRWFQMRIDMIFVLFFIVVTFISILTTGEGEGTTGIILTLAMNIMSTLQWAVNSSIDTDSLMRSVSRVFKFIDIQTEESICTKIMKELHSEDSPNALVIKNEHVKKCDTWPSGGEMVVKDLTVKYVDDGNAILENISFSISPGQRVGLLGRTGSGKSTLLSAFLRMLNIKGEIQIDGVSWNSMTLQEWRKAFGVITQKVFIFSGTFRQNLDPNGKWRDEEIWKVADQVGLKSVIEQFPGQLNFTLVDGGYVLSHGHKQLMCLARSVLSKAKIILLDEPSANLDPITYQVIRRVLRQAFAGCTVVLCEHRIEAMLDCQRFLVIEQGNVWQYESLQALLSEKSVFQRALSSSEKMKLFHGRHSSKQKPRTQITAVKEETEEEVQETRL.

Residues 1-77 (MQKSPLEKAS…QLIHALRRCF (77 aa)) lie on the Cytoplasmic side of the membrane. A helical membrane pass occupies residues 78–98 (VWRFVFYGVLLYLGEVTKAVQ). The region spanning 81-365 (FVFYGVLLYL…TAVQIWYDSL (285 aa)) is the ABC transmembrane type-1 1 domain. Residues 99–122 (PVLLGRIIASYDPDNTEERSIAIY) lie on the Extracellular side of the membrane. A helical membrane pass occupies residues 123–146 (LGIGLCLLFIVRTLLLHPAIFGLH). Residues 147 to 195 (HIGMQMRIAMFSLIYKKTLKLSSRVLDKISIGQLISLLSNNLNKFDEGL) lie on the Cytoplasmic side of the membrane. A helical transmembrane segment spans residues 196-216 (ALAHFIWIAPLQVVLLMGLLW). Over 217–222 (DLLQFS) the chain is Extracellular. A helical transmembrane segment spans residues 223 to 243 (AFCGLGLLIVLVIFQAILGKM). The Cytoplasmic portion of the chain corresponds to 244–298 (MVKYRDKRAAKINERLVITSEVIDNIYSVKAYCWESAMEKIIESLREEELKMTRR). A helical membrane pass occupies residues 299 to 319 (SAYMRFFTSSAFFFSGFFVVF). The Extracellular segment spans residues 320-339 (LSVLPYTVINGIVLRKIFTT). The helical transmembrane segment at 340-358 (ISFCIVLRMSVTRQFPTAV) threads the bilayer. Residues 359-853 (QIWYDSLGMI…YLRYFTLHRG (495 aa)) lie on the Cytoplasmic side of the membrane. ATP contacts are provided by residues tryptophan 401, 458-465 (GSTGAGKT), and glutamine 493. Residues 412 to 646 (VQLNNDDRKT…RPDFSSKLMG (235 aa)) enclose the ABC transporter 1 domain. Cysteine 524 carries the S-palmitoyl cysteine lipid modification. Phosphoserine occurs at positions 549 and 660. Positions 654–826 (TEERRSSILT…EEINEEDLKE (173 aa)) are disordered R region. Position 670 is a phosphoserine; by PKA (serine 670). Phosphoserine occurs at positions 684, 698, and 710. At threonine 715 the chain carries Phosphothreonine. Residues serine 732, serine 763, serine 785, serine 790, and serine 808 each carry the phosphoserine modification. A helical membrane pass occupies residues 854–874 (LFAVLIWCVLVFLVEVAASLF). The ABC transmembrane type-1 2 domain maps to 854–1153 (LFAVLIWCVL…SSIDTDSLMR (300 aa)). The Extracellular segment spans residues 875-913 (VLWLLKNNPVNGGNNGTKIANTSYVVVITSSSFYYIFYI). N-linked (GlcNAc...) asparagine glycosylation is found at asparagine 889 and asparagine 895. A discontinuously helical transmembrane segment spans residues 914-934 (YVGVADTLLALSLFRGLPLVH). Over 935–985 (TLITASKILHRKMLHSILHAPMSTFNKLKAGGILNRFSKDIAILDDFLPLT) the chain is Cytoplasmic. A helical membrane pass occupies residues 986–1006 (IFDFIQLLFIVVGAIIVVSAL). The Extracellular portion of the chain corresponds to 1007–1008 (QP). A helical membrane pass occupies residues 1009-1029 (YIFLATVPGLAVFILLRAYFL). The Cytoplasmic segment spans residues 1030–1090 (HTSQQLKQLE…TANWFMYLAT (61 aa)). A helical transmembrane segment spans residues 1091 to 1111 (LRWFQMRIDMIFVLFFIVVTF). The Extracellular portion of the chain corresponds to 1112–1125 (ISILTTGEGEGTTG). The chain crosses the membrane as a helical span at residues 1126 to 1146 (IILTLAMNIMSTLQWAVNSSI). Over 1147-1476 (DTDSLMRSVS…TEEEVQETRL (330 aa)) the chain is Cytoplasmic. In terms of domain architecture, ABC transporter 2 spans 1208–1439 (VKDLTVKYVD…KSVFQRALSS (232 aa)). Residues tyrosine 1215 and 1240–1247 (GRTGSGKS) each bind ATP. The interval 1382 to 1476 (RVLRQAFAGC…TEEEVQETRL (95 aa)) is interaction with GORASP2. Residue cysteine 1391 is the site of S-palmitoyl cysteine attachment. Phosphoserine occurs at positions 1440 and 1452. Residues 1445–1456 (LFHGRHSSKQKP) show a composition bias toward basic residues. Positions 1445 to 1476 (LFHGRHSSKQKPRTQITAVKEETEEEVQETRL) are disordered. Positions 1466 to 1476 (ETEEEVQETRL) are enriched in acidic residues. The short motif at 1474–1476 (TRL) is the PDZ-binding element.

Belongs to the ABC transporter superfamily. ABCC family. CFTR transporter (TC 3.A.1.202) subfamily. Monomer; does not require oligomerization for channel activity. May form oligomers in the membrane. Interacts with SLC4A7 through NHERF1. Interacts with SHANK2. Interacts with NHERF1 and MYO6. Interacts (via C-terminus) with GOPC (via PDZ domain); this promotes CFTR internalization and thereby decreases channel activity. Interacts with SLC4A7 through NHERF1. Found in a complex with MYO5B and RAB11A. Interacts with ANO1. Interacts with SLC26A8. Interacts with AHCYL1; the interaction increases CFTR activity. Interacts with CSE1L. The core-glycosylated form interacts with GORASP2 (via PDZ GRASP-type 1 domain) in respone to ER stress. Interacts with MARCHF2; the interaction leads to CFTR ubiqtuitination and degradation. Interacts with ADGRG2. In terms of processing, N-glycosylated. Post-translationally, phosphorylated; cAMP treatment promotes phosphorylation and activates the channel. Dephosphorylation decreases the ATPase activity (in vitro). Phosphorylation at PKA sites activates the channel. Phosphorylation at PKC sites enhances the response to phosphorylation by PKA. Phosphorylated by AMPK; this inhibits channel activity. Ubiquitinated, leading to its degradation in the lysosome. Deubiquitination by USP10 in early endosomes enhances its endocytic recycling to the cell membrane. Ubiquitinated by RNF185 during ER stress. Ubiquitinated by MARCHF2. In terms of tissue distribution, detected in epithelial cells in nasopharynx, submandibular gland, pancreas and ileum (at protein level). Expressed in the epididymis. In the caput section of the epididymis, expressed uniformly on both the luminal and basolateral sides of the ducts and on sperm in the caput lumen (at protein level). In the cauda, detected along the luminal border but not continuously and is also expressed on the basolateral surface. Within the caudal lumen, detected on sperm.

The protein localises to the apical cell membrane. It localises to the early endosome membrane. It is found in the cell membrane. Its subcellular location is the recycling endosome membrane. The protein resides in the endoplasmic reticulum membrane. The protein localises to the nucleus. It carries out the reaction ATP + H2O + closed Cl(-) channel = ADP + phosphate + open Cl(-) channel.. It catalyses the reaction chloride(in) = chloride(out). The catalysed reaction is hydrogencarbonate(in) = hydrogencarbonate(out). The enzyme catalyses ATP + H2O = ADP + phosphate + H(+). Functionally, epithelial ion channel that plays an important role in the regulation of epithelial ion and water transport and fluid homeostasis. Mediates the transport of chloride ions across the cell membrane. Possesses an intrinsic ATPase activity and utilizes ATP to gate its channel; the passive flow of anions through the channel is gated by cycles of ATP binding and hydrolysis by the ATP-binding domains. The ion channel is also permeable to HCO(3)(-); selectivity depends on the extracellular chloride concentration. Exerts its function also by modulating the activity of other ion channels and transporters. Contributes to the regulation of the pH and the ion content of the epithelial fluid layer. Modulates the activity of the epithelial sodium channel (ENaC) complex, in part by regulating the cell surface expression of the ENaC complex. May regulate bicarbonate secretion and salvage in epithelial cells by regulating the transporter SLC4A7. Can inhibit the chloride channel activity of ANO1. Plays a role in the chloride and bicarbonate homeostasis during sperm epididymal maturation and capacitation. This chain is Cystic fibrosis transmembrane conductance regulator, found in Rattus norvegicus (Rat).